A 623-amino-acid polypeptide reads, in one-letter code: MLFNLNDEARIIGISGMIGSGKTILAKELARDEEVRGHFANRVLFLTVSQSPNLEELRSLIRDFLTGHEAGFGTALPESVGHTRKLVILDDVRTRESLDQLMFNIPGTTTLVVSQSKLVDPRTTYDVELLNEHDATSLFCLSAFNQKSVPSGFSKSLVKQVVGESKGLPLSLKVLGASLNDRPETYWAIAVERLSRGEPVDETHESKVFAQIEATLENLDPKTKECFLDMGAFPEGKKIPVDVLINMLVKIHDLEDAAAFDVLVDLANRNLLTLVKDPTFVAMGTSYYDIFVTQHDVLRDVALHLTNRGKVSRRDRLLMPKRETMLPSEWERSNDEPYNARVVSIHTGEMTEMDWFDMDFPKAEVLIVNFSSDNYVLPPFIAKMGMLRVFVIINNGTSPAHLHDFPIPTSLTNLRSLWLERVHVPELSSSMIPLKNLHKLYLIICKINNSFDQTAIDIAQIFPKLTDITIDYCDDLAELPSTICGITSLNSISITNCPNIKELPKNISKLQALQLLRLYACPELKSLPVEICELPRLVYVDISHCLSLSSLPEKIGNVRTLEKIDMRECSLSSIPSSAVSLTSLCYVTCYREALWMWKEVEKAVPGLRIEATEKWFNMTWPDE.

NB-ARC domains lie at 2 to 51 and 119 to 249; these read LFNL…VSQS and VDPR…NMLV. 16-23 serves as a coordination point for ATP; that stretch reads GMIGSGKT. LRR repeat units lie at residues 488–511, 512–534, 536–558, and 560–581; these read SLNS…SKLQ, ALQL…ICEL, RLVY…IGNV, and TLEK…AVSL.

Belongs to the disease resistance NB-LRR family.

Its function is as follows. Potential disease resistance protein. The polypeptide is Putative disease resistance protein At5g47280 (Arabidopsis thaliana (Mouse-ear cress)).